The following is a 189-amino-acid chain: Glycerol-3-phosphate acyltransferase (189 aa).

Transmembrane regions (helical) follow at residues 1-21 (MFWS…AIVL), 50-70 (KLAI…VLLA), 81-101 (AWVG…RFQG), 111-131 (MLMA…VLTF), and 151-171 (LLAW…LMIV).

It belongs to the PlsY family. In terms of assembly, probably interacts with PlsX.

It is found in the cell inner membrane. The enzyme catalyses an acyl phosphate + sn-glycerol 3-phosphate = a 1-acyl-sn-glycero-3-phosphate + phosphate. The protein operates within lipid metabolism; phospholipid metabolism. Its function is as follows. Catalyzes the transfer of an acyl group from acyl-phosphate (acyl-PO(4)) to glycerol-3-phosphate (G3P) to form lysophosphatidic acid (LPA). This enzyme utilizes acyl-phosphate as fatty acyl donor, but not acyl-CoA or acyl-ACP. The polypeptide is Glycerol-3-phosphate acyltransferase (Pseudomonas entomophila (strain L48)).